The chain runs to 1511 residues: ATP-dependent permease PDR12 (1511 aa).

A compositionally biased stretch (basic and acidic residues) spans 1-21 (MSSTDEHIEKDISSRSNHDDD). Positions 1-37 (MSSTDEHIEKDISSRSNHDDDYANSVQSYAASEGQVD) are disordered. Ser2 bears the N-acetylserine mark. Residues 2–508 (SSTDEHIEKD…RGFQRVKGDS (507 aa)) lie on the Cytoplasmic side of the membrane. Residues Ser32, Ser52, and Ser56 each carry the phosphoserine modification. The ABC transporter 1 domain occupies 144–397 (IPAHLISKFT…FQRMGWVKPN (254 aa)). Lys426 is covalently cross-linked (Glycyl lysine isopeptide (Lys-Gly) (interchain with G-Cter in ubiquitin)). The chain crosses the membrane as a helical span at residues 509–529 (TYTKVYLSSFLIKALIIGSMF). The Extracellular segment spans residues 530–548 (HKIDDKSQSTTAGAYSRGG). Residues 549 to 569 (MLFYVLLFASVTSLAEIGNSF) traverse the membrane as a helical segment. Topologically, residues 570–597 (SSRPVIVKHKSYSMYHLSAESLQEIITE) are cytoplasmic. A helical transmembrane segment spans residues 598–618 (FPTKFVAIVILCLITYWIPFM). Over 619–622 (KYEA) the chain is Extracellular. The chain crosses the membrane as a helical span at residues 623–643 (GAFFQYILYLLTVQQCTSFIF). At 644 to 657 (KFVATMSKSGVDAH) the chain is on the cytoplasmic side. The helical transmembrane segment at 658–678 (AVGGLWVLMLCVYAGFVLPIG) threads the bilayer. Over 679–765 (EMHHWIRWLH…FAYKHAWRNW (87 aa)) the chain is Extracellular. The helical transmembrane segment at 766-786 (GVNIVWTFGYIVFNVILSEYL) threads the bilayer. Residues 787–1182 (KPVEGGGDLL…WRSPVYIRAK (396 aa)) are Cytoplasmic-facing. One can recognise an ABC transporter 2 domain in the interval 836–1084 (IAEKDVFTWN…TLLKYFERQS (249 aa)). Residues 878–885 (GESGAGKT) and 972–979 (AEALVGKT) contribute to the ATP site. Residues 1183–1203 (FFECVACALFVGLSYVGVNHS) traverse the membrane as a helical segment. A topological domain (extracellular) is located at residue Val1204. The chain crosses the membrane as a helical span at residues 1205-1225 (GGAIEAFSSIFMLLLIALAMI). The Cytoplasmic portion of the chain corresponds to 1226-1254 (NQLHVFAYDSRELYEVREAASNTFHWSVL). The helical transmembrane segment at 1255–1275 (LLCHAAVENFWSTLCQFMCFI) threads the bilayer. The Extracellular portion of the chain corresponds to 1276–1291 (CYYWPAQFSGRASHAG). A helical transmembrane segment spans residues 1292–1312 (FFFFFYVLIFPLYFVTYGLWI). Topologically, residues 1313–1318 (LYMSPD) are cytoplasmic. The chain crosses the membrane as a helical span at residues 1319–1339 (VPSASMINSNLFAAMLLFCGI). Topologically, residues 1340-1444 (LQPREKMPAF…NVKWDHRWRN (105 aa)) are extracellular. Asn1405 carries an N-linked (GlcNAc...) asparagine glycan. A helical membrane pass occupies residues 1445–1465 (FGFMWAYICFNIAAMLICYYV). Over 1466 to 1511 (VRVKVWSLKSVLNFKKWFNGPRKERHEKDTNIFQTVPGDENKITKK) the chain is Cytoplasmic.

The protein belongs to the ABC transporter superfamily. ABCG family. PDR (TC 3.A.1.205) subfamily.

It localises to the cell membrane. Functionally, plasma membrane transporter which mediates resistance to water-soluble, monocarboxylic acids with chain lengths of from C1 to C7 by active extrusion of the preservative anions from the cytosol. Also involved in the export of aromatic and branched-chain organic acids produced in amino acid catabolism. The polypeptide is ATP-dependent permease PDR12 (PDR12) (Saccharomyces cerevisiae (strain ATCC 204508 / S288c) (Baker's yeast)).